The sequence spans 324 residues: UDP-N-acetylenolpyruvoylglucosamine reductase (324 aa).

Residues 38–217 form the FAD-binding PCMH-type domain; the sequence is AGGLAELMFQ…IRAEMDAVRQ (180 aa). Arginine 183 is a catalytic residue. The active-site Proton donor is serine 232. Glutamate 302 is an active-site residue.

The protein belongs to the MurB family. The cofactor is FAD.

It is found in the cytoplasm. The catalysed reaction is UDP-N-acetyl-alpha-D-muramate + NADP(+) = UDP-N-acetyl-3-O-(1-carboxyvinyl)-alpha-D-glucosamine + NADPH + H(+). It participates in cell wall biogenesis; peptidoglycan biosynthesis. Functionally, cell wall formation. This is UDP-N-acetylenolpyruvoylglucosamine reductase from Allorhizobium ampelinum (strain ATCC BAA-846 / DSM 112012 / S4) (Agrobacterium vitis (strain S4)).